We begin with the raw amino-acid sequence, 396 residues long: NADH-quinone oxidoreductase subunit D (396 aa).

It belongs to the complex I 49 kDa subunit family. In terms of assembly, NDH-1 is composed of 14 different subunits. Subunits NuoB, C, D, E, F, and G constitute the peripheral sector of the complex.

The protein resides in the cell inner membrane. The catalysed reaction is a quinone + NADH + 5 H(+)(in) = a quinol + NAD(+) + 4 H(+)(out). NDH-1 shuttles electrons from NADH, via FMN and iron-sulfur (Fe-S) centers, to quinones in the respiratory chain. The immediate electron acceptor for the enzyme in this species is believed to be ubiquinone. Couples the redox reaction to proton translocation (for every two electrons transferred, four hydrogen ions are translocated across the cytoplasmic membrane), and thus conserves the redox energy in a proton gradient. The chain is NADH-quinone oxidoreductase subunit D from Bartonella tribocorum (strain CIP 105476 / IBS 506).